The chain runs to 411 residues: Probable indole-3-pyruvate monooxygenase YUCCA4 (411 aa).

21-26 is an FAD binding site; it reads GAGPSG. 183–188 contributes to the NADP(+) binding site; that stretch reads GCGNSG.

This sequence belongs to the FMO family. It depends on FAD as a cofactor. Expressed in leaves, stems, flowers, buds and siliques. Detected in the apical gynoecium and in the developing ovules.

It localises to the cytoplasm. The protein resides in the endoplasmic reticulum membrane. The enzyme catalyses indole-3-pyruvate + NADPH + O2 + H(+) = (indol-3-yl)acetate + CO2 + NADP(+) + H2O. The protein operates within plant hormone metabolism; auxin biosynthesis. In terms of biological role, involved in auxin biosynthesis. Both isoforms are catalitically active. Involved during embryogenesis and seedling development. Required for the formation of floral organs and vascular tissues. Belongs to the set of redundant YUCCA genes probably responsible for auxin biosynthesis in shoots. In Arabidopsis thaliana (Mouse-ear cress), this protein is Probable indole-3-pyruvate monooxygenase YUCCA4 (YUC4).